Here is a 393-residue protein sequence, read N- to C-terminus: Formate-dependent phosphoribosylglycinamide formyltransferase (393 aa).

Residues 22 to 23 (EL) and glutamate 82 each bind N(1)-(5-phospho-beta-D-ribosyl)glycinamide. Residues arginine 114, lysine 155, 160-165 (SSGKGQ), 195-198 (ESFV), and glutamate 203 contribute to the ATP site. One can recognise an ATP-grasp domain in the interval 119–308 (RLAAEELGLR…EFALHVRAVL (190 aa)). 2 residues coordinate Mg(2+): glutamate 267 and glutamate 279. N(1)-(5-phospho-beta-D-ribosyl)glycinamide contacts are provided by residues aspartate 286, lysine 356, and 363–364 (RR).

Belongs to the PurK/PurT family. In terms of assembly, homodimer.

The catalysed reaction is N(1)-(5-phospho-beta-D-ribosyl)glycinamide + formate + ATP = N(2)-formyl-N(1)-(5-phospho-beta-D-ribosyl)glycinamide + ADP + phosphate + H(+). It participates in purine metabolism; IMP biosynthesis via de novo pathway; N(2)-formyl-N(1)-(5-phospho-D-ribosyl)glycinamide from N(1)-(5-phospho-D-ribosyl)glycinamide (formate route): step 1/1. Involved in the de novo purine biosynthesis. Catalyzes the transfer of formate to 5-phospho-ribosyl-glycinamide (GAR), producing 5-phospho-ribosyl-N-formylglycinamide (FGAR). Formate is provided by PurU via hydrolysis of 10-formyl-tetrahydrofolate. This Oleidesulfovibrio alaskensis (strain ATCC BAA-1058 / DSM 17464 / G20) (Desulfovibrio alaskensis) protein is Formate-dependent phosphoribosylglycinamide formyltransferase.